The sequence spans 66 residues: Toxin BeM14 (66 aa).

The region spanning 2-66 is the LCN-type CS-alpha/beta domain; the sequence is RDAYIADDRN…IRKIPGEECR (65 aa). 4 disulfide bridges follow: cysteine 12/cysteine 65, cysteine 16/cysteine 36, cysteine 22/cysteine 46, and cysteine 26/cysteine 48.

This sequence belongs to the long (4 C-C) scorpion toxin superfamily. Sodium channel inhibitor family. Alpha subfamily. Expressed by the venom gland.

It localises to the secreted. Its function is as follows. Alpha toxins bind voltage-independently at site-3 of sodium channels (Nav) and inhibit the inactivation of the activated channels, thereby blocking neuronal transmission. Has paralytic activity in mice. The sequence is that of Toxin BeM14 from Mesobuthus eupeus (Lesser Asian scorpion).